Reading from the N-terminus, the 83-residue chain is Cytochrome b559 subunit alpha (83 aa).

The helical transmembrane segment at 21-35 (VIHSITIPSLFIAGW) threads the bilayer. A heme-binding site is contributed by H23.

The protein belongs to the PsbE/PsbF family. As to quaternary structure, heterodimer of an alpha subunit and a beta subunit. PSII is composed of 1 copy each of membrane proteins PsbA, PsbB, PsbC, PsbD, PsbE, PsbF, PsbH, PsbI, PsbJ, PsbK, PsbL, PsbM, PsbT, PsbX, PsbY, PsbZ, Psb30/Ycf12, at least 3 peripheral proteins of the oxygen-evolving complex and a large number of cofactors. It forms dimeric complexes. Heme b is required as a cofactor.

It localises to the plastid. The protein resides in the chloroplast thylakoid membrane. In terms of biological role, this b-type cytochrome is tightly associated with the reaction center of photosystem II (PSII). PSII is a light-driven water:plastoquinone oxidoreductase that uses light energy to abstract electrons from H(2)O, generating O(2) and a proton gradient subsequently used for ATP formation. It consists of a core antenna complex that captures photons, and an electron transfer chain that converts photonic excitation into a charge separation. This Ginkgo biloba (Ginkgo) protein is Cytochrome b559 subunit alpha.